The sequence spans 878 residues: Alanine--tRNA ligase (878 aa).

Zn(2+) is bound by residues histidine 567, histidine 571, cysteine 669, and histidine 673.

Belongs to the class-II aminoacyl-tRNA synthetase family. The cofactor is Zn(2+).

It is found in the cytoplasm. The catalysed reaction is tRNA(Ala) + L-alanine + ATP = L-alanyl-tRNA(Ala) + AMP + diphosphate. Catalyzes the attachment of alanine to tRNA(Ala) in a two-step reaction: alanine is first activated by ATP to form Ala-AMP and then transferred to the acceptor end of tRNA(Ala). Also edits incorrectly charged Ser-tRNA(Ala) and Gly-tRNA(Ala) via its editing domain. In Rickettsia canadensis (strain McKiel), this protein is Alanine--tRNA ligase.